Here is a 22-residue protein sequence, read N- to C-terminus: Caerin-3.1 (22 aa).

Residue Lys22 is modified to Lysine amide.

The protein belongs to the frog skin active peptide (FSAP) family. Caerin subfamily. Expressed by the skin dorsal glands.

It localises to the secreted. In terms of biological role, antibacterial peptide with narrow spectrum of activity. Inhibits the formation of NO by neuronal nitric oxide synthase. This Litoria rothii (Roth's tree frog) protein is Caerin-3.1.